The chain runs to 214 residues: ATP phosphoribosyltransferase (214 aa).

This sequence belongs to the ATP phosphoribosyltransferase family. Short subfamily. As to quaternary structure, heteromultimer composed of HisG and HisZ subunits.

The protein localises to the cytoplasm. The enzyme catalyses 1-(5-phospho-beta-D-ribosyl)-ATP + diphosphate = 5-phospho-alpha-D-ribose 1-diphosphate + ATP. It functions in the pathway amino-acid biosynthesis; L-histidine biosynthesis; L-histidine from 5-phospho-alpha-D-ribose 1-diphosphate: step 1/9. Catalyzes the condensation of ATP and 5-phosphoribose 1-diphosphate to form N'-(5'-phosphoribosyl)-ATP (PR-ATP). Has a crucial role in the pathway because the rate of histidine biosynthesis seems to be controlled primarily by regulation of HisG enzymatic activity. The polypeptide is ATP phosphoribosyltransferase (Alcanivorax borkumensis (strain ATCC 700651 / DSM 11573 / NCIMB 13689 / SK2)).